The chain runs to 361 residues: Protein Csal_2339 (361 aa).

The active-site Proton acceptor is the serine 91. Substrate-binding positions include 92–93 (GS) and 259–260 (GT).

The protein belongs to the proline racemase family.

The enzyme catalyses trans-4-hydroxy-L-proline = cis-4-hydroxy-D-proline. Functionally, in vitro, catalyzes the epimerization of trans-4-hydroxy-L-proline (t4LHyp) to cis-4-hydroxy-D-proline (c4DHyp), albeit with very low efficiency. The physiological substrate may be different. Displays neither proline racemase activity nor t3LHyp dehydratase activity. The chain is Protein Csal_2339 from Chromohalobacter salexigens (strain ATCC BAA-138 / DSM 3043 / CIP 106854 / NCIMB 13768 / 1H11).